Consider the following 89-residue polypeptide: Large ribosomal subunit protein bL27 (89 aa).

Positions 1–20 are disordered; it reads MAHKKAGGSSRNGRDSAGRR.

Belongs to the bacterial ribosomal protein bL27 family.

In Rhizorhabdus wittichii (strain DSM 6014 / CCUG 31198 / JCM 15750 / NBRC 105917 / EY 4224 / RW1) (Sphingomonas wittichii), this protein is Large ribosomal subunit protein bL27.